The primary structure comprises 316 residues: 4-hydroxy-3-methylbut-2-enyl diphosphate reductase (316 aa).

C12 lines the [4Fe-4S] cluster pocket. Positions 41 and 74 each coordinate (2E)-4-hydroxy-3-methylbut-2-enyl diphosphate. Dimethylallyl diphosphate contacts are provided by H41 and H74. Residues H41 and H74 each contribute to the isopentenyl diphosphate site. C96 contacts [4Fe-4S] cluster. H124 contributes to the (2E)-4-hydroxy-3-methylbut-2-enyl diphosphate binding site. H124 contacts dimethylallyl diphosphate. H124 is an isopentenyl diphosphate binding site. The active-site Proton donor is E126. A (2E)-4-hydroxy-3-methylbut-2-enyl diphosphate-binding site is contributed by T167. C197 provides a ligand contact to [4Fe-4S] cluster. Positions 225, 226, 227, and 269 each coordinate (2E)-4-hydroxy-3-methylbut-2-enyl diphosphate. Dimethylallyl diphosphate-binding residues include S225, S226, N227, and S269. Positions 225, 226, 227, and 269 each coordinate isopentenyl diphosphate.

Belongs to the IspH family. As to quaternary structure, homodimer. Requires [4Fe-4S] cluster as cofactor.

It catalyses the reaction isopentenyl diphosphate + 2 oxidized [2Fe-2S]-[ferredoxin] + H2O = (2E)-4-hydroxy-3-methylbut-2-enyl diphosphate + 2 reduced [2Fe-2S]-[ferredoxin] + 2 H(+). The enzyme catalyses dimethylallyl diphosphate + 2 oxidized [2Fe-2S]-[ferredoxin] + H2O = (2E)-4-hydroxy-3-methylbut-2-enyl diphosphate + 2 reduced [2Fe-2S]-[ferredoxin] + 2 H(+). Its pathway is isoprenoid biosynthesis; dimethylallyl diphosphate biosynthesis; dimethylallyl diphosphate from (2E)-4-hydroxy-3-methylbutenyl diphosphate: step 1/1. It functions in the pathway isoprenoid biosynthesis; isopentenyl diphosphate biosynthesis via DXP pathway; isopentenyl diphosphate from 1-deoxy-D-xylulose 5-phosphate: step 6/6. In terms of biological role, catalyzes the conversion of 1-hydroxy-2-methyl-2-(E)-butenyl 4-diphosphate (HMBPP) into a mixture of isopentenyl diphosphate (IPP) and dimethylallyl diphosphate (DMAPP). Acts in the terminal step of the DOXP/MEP pathway for isoprenoid precursor biosynthesis. In Salmonella agona (strain SL483), this protein is 4-hydroxy-3-methylbut-2-enyl diphosphate reductase.